The following is a 424-amino-acid chain: Tryptophan synthase beta chain (424 aa).

K108 carries the post-translational modification N6-(pyridoxal phosphate)lysine.

Belongs to the TrpB family. As to quaternary structure, tetramer of two alpha and two beta chains. It depends on pyridoxal 5'-phosphate as a cofactor.

The enzyme catalyses (1S,2R)-1-C-(indol-3-yl)glycerol 3-phosphate + L-serine = D-glyceraldehyde 3-phosphate + L-tryptophan + H2O. The protein operates within amino-acid biosynthesis; L-tryptophan biosynthesis; L-tryptophan from chorismate: step 5/5. Functionally, the beta subunit is responsible for the synthesis of L-tryptophan from indole and L-serine. In Thermoplasma acidophilum (strain ATCC 25905 / DSM 1728 / JCM 9062 / NBRC 15155 / AMRC-C165), this protein is Tryptophan synthase beta chain (trpB).